Consider the following 241-residue polypeptide: Probable porphobilinogen deaminase (241 aa).

The protein belongs to the HMBS family.

It carries out the reaction 4 porphobilinogen + H2O = hydroxymethylbilane + 4 NH4(+). It participates in porphyrin-containing compound metabolism; protoporphyrin-IX biosynthesis; coproporphyrinogen-III from 5-aminolevulinate: step 2/4. Its function is as follows. Tetrapolymerization of the monopyrrole PBG into the hydroxymethylbilane pre-uroporphyrinogen in several discrete steps. The sequence is that of Probable porphobilinogen deaminase (hemC) from Chlamydia trachomatis serovar D (strain ATCC VR-885 / DSM 19411 / UW-3/Cx).